The sequence spans 163 residues: Allophycocyanin alpha-B chain (163 aa).

Position 71 is an N4-methylasparagine (Asn-71). Position 81 (Cys-81) interacts with (2R,3E)-phycocyanobilin.

The protein belongs to the phycobiliprotein family. Contains one covalently linked bilin chromophore.

The protein localises to the plastid. The protein resides in the chloroplast thylakoid membrane. Its function is as follows. Allophycocyanin is a photosynthetic bile pigment-protein complex with maximum absorption at approximately 650 nanometers. This chain is Allophycocyanin alpha-B chain (apcD), found in Cyanidium caldarium (Red alga).